The following is a 211-amino-acid chain: Mitotic spindle assembly checkpoint protein MAD2B (211 aa).

The HORMA domain occupies 13-203 (QVVADVLCEF…SDILKMQLYV (191 aa)). Residues 21 to 155 (EFLEVAVHLI…FTVLVHTREA (135 aa)) are mediates interaction with REV1 and REV3L and homodimerization. The mediates interaction with ipaB stretch occupies residues 150–211 (VHTREAATRN…YVEERAHKGS (62 aa)).

In terms of assembly, homooligomer. Heterodimer with REV3L. This dimer forms the minimal DNA polymerase zeta complex (Pol-zeta2), with REV3L bearing DNA polymerase catalytic activity, although its activity is very low in this context. Component of the tetrameric Pol-zeta complex (Pol-zeta4), which consists of REV3L, MAD2L2, POLD2 and POLD3; Pol-zeta4 is the fully active form of DNA polymerase zeta. Component of the shieldin complex, consisting of SHLD1, SHLD2, SHLD3 and MAD2L2/REV7. Within the complex, SHLD2 forms a scaffold which interacts with a SHLD3-MAD2L2 subcomplex via its N-terminus, and with SHLD1 via its C-terminus. Interacts with REV1. Interacts with ADAM9. Interacts with CHAMP1. Interacts with FZR1 (in complex with the anaphase promoting complex APC). Interacts with CDC20; PubMed:11459825 could not detect the interaction. Interacts with RAN. Interacts with ELK1; the interaction is direct and recruits MAD2L2 to ELK1-specific promoters. May interact with the JNK kinases MAPK8 and/or MAPK9 to stimulate ELK1 phosphorylation and transcriptional activity upon DNA damage. Interacts with TCF7L2; prevents its binding to promoters and negatively modulates its transcriptional activity. Interacts with YY1AP1. Interacts with S.flexneri protein ipaB; prevents the interaction of MAD2L2 with FZR1 and CDC20 resulting in an activation of the anaphase-promoting complex APC and a cell cycle arrest. Interacts with PRCC; the interaction is direct. Interacts with POGZ. Interacts with ASTE1. In terms of tissue distribution, ubiquitously expressed.

Its subcellular location is the nucleus. It localises to the cytoplasm. It is found in the cytoskeleton. The protein localises to the spindle. The protein resides in the chromosome. In terms of biological role, adapter protein able to interact with different proteins and involved in different biological processes. Mediates the interaction between the error-prone DNA polymerase zeta catalytic subunit REV3L and the inserter polymerase REV1, thereby mediating the second polymerase switching in translesion DNA synthesis. Translesion DNA synthesis releases the replication blockade of replicative polymerases, stalled in presence of DNA lesions. Component of the shieldin complex, which plays an important role in repair of DNA double-stranded breaks (DSBs). During G1 and S phase of the cell cycle, the complex functions downstream of TP53BP1 to promote non-homologous end joining (NHEJ) and suppress DNA end resection. Mediates various NHEJ-dependent processes including immunoglobulin class-switch recombination, and fusion of unprotected telomeres. May also regulate another aspect of cellular response to DNA damage through regulation of the JNK-mediated phosphorylation and activation of the transcriptional activator ELK1. Inhibits the FZR1- and probably CDC20-mediated activation of the anaphase promoting complex APC thereby regulating progression through the cell cycle. Regulates TCF7L2-mediated gene transcription and may play a role in epithelial-mesenchymal transdifferentiation. The sequence is that of Mitotic spindle assembly checkpoint protein MAD2B (MAD2L2) from Homo sapiens (Human).